A 316-amino-acid chain; its full sequence is HPr kinase/phosphorylase (316 aa).

Catalysis depends on residues histidine 143 and lysine 164. 158-165 serves as a coordination point for ATP; the sequence is GEAGSGKS. Serine 165 contacts Mg(2+). Aspartate 182 acts as the Proton acceptor; for phosphorylation activity. Proton donor; for dephosphorylation activity in catalysis. Residues 206–215 are important for the catalytic mechanism of both phosphorylation and dephosphorylation; sequence LEVRGLGVLN. Residue glutamate 207 participates in Mg(2+) binding. Arginine 251 is a catalytic residue. The segment at 272-277 is important for the catalytic mechanism of dephosphorylation; the sequence is PVMPGR.

This sequence belongs to the HPrK/P family. Homohexamer. It depends on Mg(2+) as a cofactor.

The enzyme catalyses [HPr protein]-L-serine + ATP = [HPr protein]-O-phospho-L-serine + ADP + H(+). It carries out the reaction [HPr protein]-O-phospho-L-serine + phosphate + H(+) = [HPr protein]-L-serine + diphosphate. In terms of biological role, catalyzes the ATP- as well as the pyrophosphate-dependent phosphorylation of a specific serine residue in HPr, a phosphocarrier protein of the phosphoenolpyruvate-dependent sugar phosphotransferase system (PTS). HprK/P also catalyzes the pyrophosphate-producing, inorganic phosphate-dependent dephosphorylation (phosphorolysis) of seryl-phosphorylated HPr (P-Ser-HPr). This is HPr kinase/phosphorylase from Xanthomonas euvesicatoria pv. vesicatoria (strain 85-10) (Xanthomonas campestris pv. vesicatoria).